A 73-amino-acid polypeptide reads, in one-letter code: UPF0154 protein PEPE_0872 (73 aa).

The helical transmembrane segment at 5–25 threads the bilayer; sequence IWIMIVIIALLVGAVGGFFFA.

Belongs to the UPF0154 family.

It localises to the cell membrane. This chain is UPF0154 protein PEPE_0872, found in Pediococcus pentosaceus (strain ATCC 25745 / CCUG 21536 / LMG 10740 / 183-1w).